Consider the following 396-residue polypeptide: Ribosomal RNA large subunit methyltransferase I (396 aa).

The PUA domain occupies 2 to 81 (TVRLFLAKGR…EEINIEFFIR (80 aa)).

Belongs to the methyltransferase superfamily. RlmI family.

Its subcellular location is the cytoplasm. The enzyme catalyses cytidine(1962) in 23S rRNA + S-adenosyl-L-methionine = 5-methylcytidine(1962) in 23S rRNA + S-adenosyl-L-homocysteine + H(+). Functionally, specifically methylates the cytosine at position 1962 (m5C1962) of 23S rRNA. The protein is Ribosomal RNA large subunit methyltransferase I of Serratia proteamaculans (strain 568).